We begin with the raw amino-acid sequence, 60 residues long: UPF0434 protein Bpro_2950 (60 aa).

It belongs to the UPF0434 family.

The sequence is that of UPF0434 protein Bpro_2950 from Polaromonas sp. (strain JS666 / ATCC BAA-500).